We begin with the raw amino-acid sequence, 233 residues long: Attacin-B (233 aa).

A signal peptide spans 1-17; it reads MFAKLFLVSVLLVGVNS. A propeptide spanning residues 18-46 is cleaved from the precursor; that stretch reads RYVLVEEPGYYDKQYEEQPQQWVNSRVRR.

Belongs to the attacin/sarcotoxin-2 family.

It localises to the secreted. Functionally, hemolymph antibacterial protein. This is Attacin-B from Hyalophora cecropia (Cecropia moth).